Consider the following 776-residue polypeptide: Systemic RNA interference defective protein 1 (776 aa).

Residues 1–17 (MIRVYLIILMHLVIGLT) form the signal peptide. Residues 18–319 (QNNSTTPSPI…ENQSYAVPTA (302 aa)) lie on the Extracellular side of the membrane. Asn-19, Asn-20, Asn-32, Asn-205, Asn-210, Asn-234, Asn-290, and Asn-311 each carry an N-linked (GlcNAc...) asparagine glycan. The tract at residues 22–312 (TTPSPIITSS…SFEFKKLENQ (291 aa)) is involved in dsRNA-binding. The chain crosses the membrane as a helical span at residues 320 to 340 (LMMIFLTTPCLLFLPIVINII). Residues 341–429 (KNSRKLAPSQ…KQDSLSLHGQ (89 aa)) lie on the Cytoplasmic side of the membrane. The disordered stretch occupies residues 360 to 390 (PSEQRDMDLSHDEQQNTSSELENNGEIPAAE). Positions 362 to 373 (EQRDMDLSHDEQ) are enriched in basic and acidic residues. The helical transmembrane segment at 430–450 (MLQYPVAIILPVLMHTAIEFH) threads the bilayer. Over 451 to 481 (KWTTSTMANRDEMCFHNHACARPLGELRAWN) the chain is Extracellular. The helical transmembrane segment at 482 to 502 (NIITNIGYTLYGAIFIVLSIC) threads the bilayer. Over 503–510 (RRGRHEYS) the chain is Cytoplasmic. The helical transmembrane segment at 511–531 (HVFGTYECTLLDVTIGVFMVL) threads the bilayer. At 532–543 (QSIASATYHICP) the chain is on the extracellular side. A helical membrane pass occupies residues 544 to 564 (SDVAFQFDTPCIQVICGLLMV). The Cytoplasmic portion of the chain corresponds to 565–575 (RQWFVRHESPS). A helical membrane pass occupies residues 576-596 (PAYTNILLVGVVSLNFLISAF). The Extracellular portion of the chain corresponds to 597–599 (SKT). The helical transmembrane segment at 600-620 (SYVRFIIAVIHVIVVGSICLA) threads the bilayer. Residues 621-633 (KERSLGSEKLKTR) are Cytoplasmic-facing. A helical transmembrane segment spans residues 634-654 (FFIMAFSMGNFAAIVMYLTLS). Over 655–659 (AFHLN) the chain is Extracellular. The helical transmembrane segment at 660-680 (QIATYCFIINCIMYLMYYGCM) threads the bilayer. Residues 681 to 691 (KVLHSERITSK) are Cytoplasmic-facing. A helical membrane pass occupies residues 692–712 (AKLCGALSLLAWAVAGFFFFQ). At 713–741 (DDTDWTRSAAASRALNKPCLLLGFFGSHD) the chain is on the extracellular side. The chain crosses the membrane as a helical span at residues 742-762 (LWHIFGALAGLFTFIFVSFVD). Over 763-776 (DDLINTRKTSINIF) the chain is Cytoplasmic.

Belongs to the SID1 family. As to quaternary structure, may self-associate to form multimers. Expressed in most non-neuronal cells, including body wall muscle cells.

It localises to the cell membrane. Its function is as follows. Plays a role in RNA-mediated gene silencing by acting cell-autonomously as a channel for the transport of double-stranded RNA (dsRNA) between cells. Mediates the spread of dsRNA and subsequent silencing of genes in cells distant from the site of dsRNA introduction. Selective for dsRNA. Preferentially binds long dsRNA, from 50 base pairs up to 700. Short 20 base-pair long molecules are not bound. May also bind dsDNA, but with lower affinity. Binding may be sequence-independent. Required for avoidance behavior induced by small RNAs derived from pathogenic bacteria such as P.aeruginosa. This chain is Systemic RNA interference defective protein 1, found in Caenorhabditis elegans.